Reading from the N-terminus, the 215-residue chain is Large ribosomal subunit protein uL4 (215 aa).

Residues 43–101 (HQRQGTSKTKERGEVRGSGRKLYRQKGTGNARVGDAQSPIRRGGGRAHGARPRDYAHDL) are disordered. Positions 50 to 59 (KTKERGEVRG) are enriched in basic and acidic residues.

The protein belongs to the universal ribosomal protein uL4 family. As to quaternary structure, part of the 50S ribosomal subunit.

One of the primary rRNA binding proteins, this protein initially binds near the 5'-end of the 23S rRNA. It is important during the early stages of 50S assembly. It makes multiple contacts with different domains of the 23S rRNA in the assembled 50S subunit and ribosome. Its function is as follows. Forms part of the polypeptide exit tunnel. This is Large ribosomal subunit protein uL4 from Salinibacter ruber (strain DSM 13855 / M31).